A 221-amino-acid chain; its full sequence is Putative 3-methyladenine DNA glycosylase (221 aa).

Belongs to the DNA glycosylase MPG family.

The polypeptide is Putative 3-methyladenine DNA glycosylase (Herpetosiphon aurantiacus (strain ATCC 23779 / DSM 785 / 114-95)).